We begin with the raw amino-acid sequence, 316 residues long: Aquaglyceroporin-2 (316 aa).

The disordered stretch occupies residues 1 to 31 (MADERGPINKSGPSSTYGATENNGESGGTRG). Residues 1–59 (MADERGPINKSGPSSTYGATENNGESGGTRGAPATEDVIVIQDSGWYYIKFRFKEPFAE) are Cytoplasmic-facing. Residues 11–24 (SGPSSTYGATENNG) are compositionally biased toward polar residues. Residues 60–80 (FLGTFILVAFGVGAIAQTVLS) traverse the membrane as a helical segment. Over 81–86 (KGATGN) the chain is Extracellular. A helical membrane pass occupies residues 87–107 (WITIALGFGLGLALGIAVSGH). Residues 108 to 131 (YSGGHLNPAVTITLAIYRKFPWVK) lie on the Cytoplasmic side of the membrane. Positions 114 to 116 (NPA) match the NPA 1 motif. A helical membrane pass occupies residues 132 to 152 (VPVYITAQVLGAFVAAAVIYL). The Extracellular portion of the chain corresponds to 153-187 (NYLPAIYNFAGDKRDVIGANATAGIFATYPQPFMS). N-linked (GlcNAc...) asparagine glycosylation occurs at Asn-172. The helical transmembrane segment at 188-208 (IGGAFFSEALGTFFLLFVILA) threads the bilayer. The Cytoplasmic portion of the chain corresponds to 209–219 (MTDERNVPTTR). A helical membrane pass occupies residues 220 to 240 (IVAPITIGLTLTAIAISLGFE). Residues 241–271 (TGFSLNAARDFGPRLFTFFIGYGVEVFTAYK) are Extracellular-facing. Positions 246 to 248 (NAA) match the NPA 2 motif. A helical membrane pass occupies residues 272-292 (FYFWIPLVAPIVGGLVAGFVY). Over 293 to 316 (DSLLYWGEKSFLNKNVHHEHRAVA) the chain is Cytoplasmic.

This sequence belongs to the MIP/aquaporin (TC 1.A.8) family.

Its subcellular location is the cell membrane. The protein resides in the membrane. The catalysed reaction is H2O(in) = H2O(out). It catalyses the reaction glycerol(in) = glycerol(out). Its activity is regulated as follows. Polyethylene glycol (PEG) stimulates whereas glycerol inhibits the aquaporin activity. In terms of biological role, water channel required to facilitate the transport of water across membranes. Stimulates plant drought tolerance by facilitating the transport of water from the arbuscular mycorrhiza fungus to host plants. In Rhizophagus irregularis (Arbuscular mycorrhizal fungus), this protein is Aquaglyceroporin-2.